Consider the following 79-residue polypeptide: Putative membrane protein insertion efficiency factor (79 aa).

It belongs to the UPF0161 family.

The protein localises to the cell inner membrane. Its function is as follows. Could be involved in insertion of integral membrane proteins into the membrane. The polypeptide is Putative membrane protein insertion efficiency factor (Cytophaga hutchinsonii (strain ATCC 33406 / DSM 1761 / CIP 103989 / NBRC 15051 / NCIMB 9469 / D465)).